Consider the following 428-residue polypeptide: Serine--tRNA ligase (428 aa).

Residue 235 to 237 (TAE) participates in L-serine binding. Position 266–268 (266–268 (RSE)) interacts with ATP. Residue E289 coordinates L-serine. 353–356 (EISS) is an ATP binding site. Position 389 (S389) interacts with L-serine.

It belongs to the class-II aminoacyl-tRNA synthetase family. Type-1 seryl-tRNA synthetase subfamily. In terms of assembly, homodimer. The tRNA molecule binds across the dimer.

Its subcellular location is the cytoplasm. The catalysed reaction is tRNA(Ser) + L-serine + ATP = L-seryl-tRNA(Ser) + AMP + diphosphate + H(+). It carries out the reaction tRNA(Sec) + L-serine + ATP = L-seryl-tRNA(Sec) + AMP + diphosphate + H(+). Its pathway is aminoacyl-tRNA biosynthesis; selenocysteinyl-tRNA(Sec) biosynthesis; L-seryl-tRNA(Sec) from L-serine and tRNA(Sec): step 1/1. In terms of biological role, catalyzes the attachment of serine to tRNA(Ser). Is also able to aminoacylate tRNA(Sec) with serine, to form the misacylated tRNA L-seryl-tRNA(Sec), which will be further converted into selenocysteinyl-tRNA(Sec). The protein is Serine--tRNA ligase of Shewanella halifaxensis (strain HAW-EB4).